Reading from the N-terminus, the 417-residue chain is Lipoyl synthase, mitochondrial (417 aa).

A disordered region spans residues 35–56; it reads EANPTDLAGLKRKAKRRPTKLA. A compositionally biased stretch (basic residues) spans 44-53; it reads LKRKAKRRPT. The [4Fe-4S] cluster site is built by Cys-122, Cys-127, Cys-133, Cys-152, Cys-156, Cys-159, and Ser-367. A Radical SAM core domain is found at 137-356; it reads KKSEATATIM…RDKALEMGFL (220 aa). The tract at residues 389–417 is disordered; that stretch reads IEEQQHDKENNNLLLSKEDEKTTQEKANF. Over residues 391 to 417 the composition is skewed to basic and acidic residues; that stretch reads EQQHDKENNNLLLSKEDEKTTQEKANF.

This sequence belongs to the radical SAM superfamily. Lipoyl synthase family. Requires [4Fe-4S] cluster as cofactor.

The protein resides in the mitochondrion. The enzyme catalyses [[Fe-S] cluster scaffold protein carrying a second [4Fe-4S](2+) cluster] + N(6)-octanoyl-L-lysyl-[protein] + 2 oxidized [2Fe-2S]-[ferredoxin] + 2 S-adenosyl-L-methionine + 4 H(+) = [[Fe-S] cluster scaffold protein] + N(6)-[(R)-dihydrolipoyl]-L-lysyl-[protein] + 4 Fe(3+) + 2 hydrogen sulfide + 2 5'-deoxyadenosine + 2 L-methionine + 2 reduced [2Fe-2S]-[ferredoxin]. It participates in protein modification; protein lipoylation via endogenous pathway; protein N(6)-(lipoyl)lysine from octanoyl-[acyl-carrier-protein]: step 2/2. Its function is as follows. Catalyzes the radical-mediated insertion of two sulfur atoms into the C-6 and C-8 positions of the octanoyl moiety bound to the lipoyl domains of lipoate-dependent enzymes, thereby converting the octanoylated domains into lipoylated derivatives. The sequence is that of Lipoyl synthase, mitochondrial from Komagataella phaffii (strain GS115 / ATCC 20864) (Yeast).